The sequence spans 188 residues: GMP synthase [glutamine-hydrolyzing] subunit A (188 aa).

Positions 1–188 (MIVIMDNGGQ…RNFAELCGEL (188 aa)) constitute a Glutamine amidotransferase type-1 domain. Cys78 acts as the Nucleophile in catalysis. Active-site residues include His165 and Glu167.

In terms of assembly, heterodimer composed of a glutamine amidotransferase subunit (A) and a GMP-binding subunit (B).

The catalysed reaction is XMP + L-glutamine + ATP + H2O = GMP + L-glutamate + AMP + diphosphate + 2 H(+). The protein operates within purine metabolism; GMP biosynthesis; GMP from XMP (L-Gln route): step 1/1. Catalyzes the synthesis of GMP from XMP. This chain is GMP synthase [glutamine-hydrolyzing] subunit A, found in Thermococcus kodakarensis (strain ATCC BAA-918 / JCM 12380 / KOD1) (Pyrococcus kodakaraensis (strain KOD1)).